The following is a 336-amino-acid chain: DNA polymerase III subunit delta' (336 aa).

DNA polymerase III contains a core (composed of alpha, epsilon and theta chains) that associates with a tau subunit. This core dimerizes to form the POLIII' complex. PolIII' associates with the gamma complex (composed of gamma, delta, delta', psi and chi chains) and with the beta chain to form the complete DNA polymerase III complex.

It carries out the reaction DNA(n) + a 2'-deoxyribonucleoside 5'-triphosphate = DNA(n+1) + diphosphate. DNA polymerase III is a complex, multichain enzyme responsible for most of the replicative synthesis in bacteria. This DNA polymerase also exhibits 3' to 5' exonuclease activity. The protein is DNA polymerase III subunit delta' (holB) of Buchnera aphidicola subsp. Baizongia pistaciae (strain Bp).